Reading from the N-terminus, the 1039-residue chain is MSFTPEVVSRKSGVGVIPSPAPFLTPRLERRRPDSFSNRLDRDNKEVNVQVILRCKPLSEEEQKSSVPRVISCNEMRREVNVLHTIANKQVDRLFNFDKVFGPKSQQRSIYDQAIAPIVHEVLEGFSCTVFAYGQTGTGKTYTMEGGMRKKGGDLPAEAGVIPRAVRHIFDTLEAQNADYSMKVTFLELYNEEVTDLLAQDDSSRSSEDKQRKPISLMEDGKGSVVLRGLEEEVVYSANDIYALLERGSSKRRTADTLLNKRSSRSHSVFTITVHIKEESMGDEELIKCGKLNLVDLAGSENILRSGARDGRAREAGEINKSLLTLGRVINALVEHSSHVPYRDSKLTRLLRDSLGGKTKTCIIATISPSAHSLEETLSTLDYAYRAKNIKNKPEANQKLSKAVLLKDLYLELERMKEDVRAARDKNGVYIAHERYTQEEVEKKARIERIEQLENELNLSESEVSKFCDLYETEKEKLLDVESDLKDCKRNLHNSNKDLLDLKENYIQVVSKLKEKEVIVSRMKASETSLIDRAKGLRCDLQHASNDINSLFTRLDQKDKLESDNQSMLLKFGSQLDQNLKDLHRTVLGSVSQQQQQLRTMEEHTHSFLAHKYDATRDLESRIGKTSDTYTSGIAALKELSEMLQKKASSDLEKKNTSIVSQIEAVEKFLTTSATEASAVAQDIHNLLNDQKKLLALAARQQEQGLVRSMRSAQEISNSTSTIFSNIYNQAHDVVEAIRASQAEKSRQLDAFEMKFKEEAEREEKQALNDISLILSKLTSKKTAMISDASSNIREHDIQEEKRLYEQMSGMQQVSIGAKEELCDYLKKEKTHFTENTIASAESITVMDSYLEDCLGRANDSKTLWETTETGIKNLNTKYQQELNVTMEDMAKENEKVQDEFTSTFSSMDANFVSRTNELHAAVNDSLMQDRENKETTEAIVETCMNQVTLLQENHGQAVSNIRNKAEQSLIKDYQVDQHKNETPKKQSINVPSLDSIEEMRTLFSQNTLSEEHTSLEKISTKQGLGEANNRTPFLEVNK.

One can recognise a Kinesin motor domain in the interval 48–390 (NVQVILRCKP…LDYAYRAKNI (343 aa)). ATP is bound at residue 134–141 (GQTGTGKT). The segment at 1008–1039 (TLSEEHTSLEKISTKQGLGEANNRTPFLEVNK) is disordered. Basic and acidic residues predominate over residues 1010–1020 (SEEHTSLEKIS).

This sequence belongs to the TRAFAC class myosin-kinesin ATPase superfamily. Kinesin family. KIN-5/BimC subfamily.

It is found in the cytoplasm. The protein resides in the cytoskeleton. Its subcellular location is the spindle. Responsible for microtubule translocation. May be important for the organization of phragmoplast-specific arrays of microtubules. Plays an essential role in stabilizing the mitotic spindle. Required during mitotic cytokinesis. This is Kinesin-like protein KIN-5B from Arabidopsis thaliana (Mouse-ear cress).